Consider the following 126-residue polypeptide: MSKSIFVVCITLLVVLSPTLNAKMVTYPNGDRHCVMAQGQVISACLQQANGLPHADCCYAINDVNRYVETIYGRLALCKCFQEILKDSRFTKLIGMPEKCAIPNAVPFDPKTDCDRFVEHIWLKMF.

The N-terminal stretch at 1–22 is a signal peptide; that stretch reads MSKSIFVVCITLLVVLSPTLNA. Cystine bridges form between cysteine 34–cysteine 80, cysteine 45–cysteine 57, cysteine 58–cysteine 100, and cysteine 78–cysteine 114.

The protein belongs to the plant LTP family.

In terms of biological role, plant non-specific lipid-transfer proteins transfer phospholipids as well as galactolipids across membranes. May play a role in wax or cutin deposition in the cell walls of expanding epidermal cells and certain secretory tissues. The protein is Non-specific lipid-transfer protein 15 (LTP15) of Arabidopsis thaliana (Mouse-ear cress).